We begin with the raw amino-acid sequence, 377 residues long: GTP 3',8-cyclase (377 aa).

The interval 1–29 (MTTRLYLSPTPPRNDREGASKSTSASIKH) is disordered. Residues 45–271 (RFGRIARDLR…FTLSPAKEPR (227 aa)) form the Radical SAM core domain. Residue Arg54 participates in GTP binding. Residues Cys61 and Cys65 each contribute to the [4Fe-4S] cluster site. Tyr67 serves as a coordination point for S-adenosyl-L-methionine. Cys68 is a binding site for [4Fe-4S] cluster. Arg105 lines the GTP pocket. Residue Gly109 coordinates S-adenosyl-L-methionine. Thr140 contacts GTP. Ser164 is a binding site for S-adenosyl-L-methionine. Lys201 lines the GTP pocket. Position 235 (Met235) interacts with S-adenosyl-L-methionine. The [4Fe-4S] cluster site is built by Cys304 and Cys307. 309–311 (RSR) contacts GTP. Cys321 is a [4Fe-4S] cluster binding site.

It belongs to the radical SAM superfamily. MoaA family. Monomer and homodimer. Requires [4Fe-4S] cluster as cofactor.

The catalysed reaction is GTP + AH2 + S-adenosyl-L-methionine = (8S)-3',8-cyclo-7,8-dihydroguanosine 5'-triphosphate + 5'-deoxyadenosine + L-methionine + A + H(+). Its pathway is cofactor biosynthesis; molybdopterin biosynthesis. Functionally, catalyzes the cyclization of GTP to (8S)-3',8-cyclo-7,8-dihydroguanosine 5'-triphosphate. The polypeptide is GTP 3',8-cyclase (Corynebacterium glutamicum (strain R)).